A 334-amino-acid chain; its full sequence is GTPase Obg (334 aa).

An Obg domain is found at 1 to 159 (MKFIDQAIIH…RDIQLELMLL (159 aa)). The disordered stretch occupies residues 67-86 (AQNGQNGSSRKSSGKKGDDI). Residues 68-77 (QNGQNGSSRK) show a composition bias toward low complexity. The region spanning 160–333 (ADVGTLGMPN…LCSDITKYLK (174 aa)) is the OBG-type G domain. GTP-binding positions include 166–173 (GMPNVGKS), 191–195 (FTTLH), 213–216 (DIPG), 283–286 (NKID), and 314–316 (SSM). Residues serine 173 and threonine 193 each contribute to the Mg(2+) site.

This sequence belongs to the TRAFAC class OBG-HflX-like GTPase superfamily. OBG GTPase family. Monomer. Mg(2+) is required as a cofactor.

The protein localises to the cytoplasm. Functionally, an essential GTPase which binds GTP, GDP and possibly (p)ppGpp with moderate affinity, with high nucleotide exchange rates and a fairly low GTP hydrolysis rate. Plays a role in control of the cell cycle, stress response, ribosome biogenesis and in those bacteria that undergo differentiation, in morphogenesis control. The polypeptide is GTPase Obg (Buchnera aphidicola subsp. Acyrthosiphon pisum (strain 5A)).